Consider the following 111-residue polypeptide: Putative lipid-binding protein AIR1 (111 aa).

Residues 1–23 form the signal peptide; it reads MAPRTPLALFVSLNLLFFTYTSA. Cystine bridges form between C28–C58, C38–C57, and C74–C110.

The protein belongs to the plant LTP family. PEARLI1 subfamily.

The protein localises to the secreted. This chain is Putative lipid-binding protein AIR1 (AIR1), found in Arabidopsis thaliana (Mouse-ear cress).